The sequence spans 948 residues: Probable disease resistance protein At5g47260 (948 aa).

Positions 20-57 form a coiled coil; it reads RKYLYNLERNLEALHKVMQDLNAMRNDLLKRLSKEEEI. The region spanning 134 to 432 is the NB-ARC domain; sequence HRALPPLVIK…CEGILAKEDR (299 aa). 176–183 is a binding site for ATP; sequence GRGGVGKT. LRR repeat units follow at residues 498 to 519, 520 to 542, 545 to 567, 569 to 591, 592 to 614, 615 to 636, 640 to 661, 666 to 686, and 690 to 711; these read MIRR…PQCS, ELTT…FFQW, GLVV…VSSL, LLRF…KELK, SLIH…ASLL, NLQV…EDIQ, SLKE…LSIQ, SIRR…LSLN, and SLCE…WRCT.

This sequence belongs to the disease resistance NB-LRR family.

Potential disease resistance protein. This chain is Probable disease resistance protein At5g47260, found in Arabidopsis thaliana (Mouse-ear cress).